A 222-amino-acid chain; its full sequence is Protein-L-isoaspartate O-methyltransferase (222 aa).

The active site involves serine 69.

It belongs to the methyltransferase superfamily. L-isoaspartyl/D-aspartyl protein methyltransferase family.

Its subcellular location is the cytoplasm. The enzyme catalyses [protein]-L-isoaspartate + S-adenosyl-L-methionine = [protein]-L-isoaspartate alpha-methyl ester + S-adenosyl-L-homocysteine. Functionally, catalyzes the methyl esterification of L-isoaspartyl residues in peptides and proteins that result from spontaneous decomposition of normal L-aspartyl and L-asparaginyl residues. It plays a role in the repair and/or degradation of damaged proteins. The polypeptide is Protein-L-isoaspartate O-methyltransferase (Nitrosomonas europaea (strain ATCC 19718 / CIP 103999 / KCTC 2705 / NBRC 14298)).